The following is a 234-amino-acid chain: Uridylate kinase (234 aa).

9–12 (KLSG) is a binding site for ATP. G51 provides a ligand contact to UMP. ATP contacts are provided by G52 and R56. UMP-binding positions include D71 and 132 to 139 (CGNPFFTT). Positions 159, 165, and 168 each coordinate ATP.

This sequence belongs to the UMP kinase family. In terms of assembly, homohexamer.

Its subcellular location is the cytoplasm. The catalysed reaction is UMP + ATP = UDP + ADP. The protein operates within pyrimidine metabolism; CTP biosynthesis via de novo pathway; UDP from UMP (UMPK route): step 1/1. Its activity is regulated as follows. Inhibited by UTP. Functionally, catalyzes the reversible phosphorylation of UMP to UDP. The chain is Uridylate kinase from Prochlorococcus marinus (strain MIT 9301).